We begin with the raw amino-acid sequence, 56 residues long: Endoregulin (56 aa).

The chain crosses the membrane as a helical span at residues 25-45 (LTVIGLFTSTFLLFVLFAVVF).

Homooligomer. Can also form heterooligomers with other sarcoplasmic/endoplasmic reticulum calcium ATPase (SERCA) regulators ARLN, PLN, SLN and STRIT1/DWORF. Monomer. Interacts as a monomer with ATP2A2/SERCA2; the interaction results in inhibition of ATP2A2 Ca(2+) affinity. Largely expressed in non-muscle tissues with the exception of weak expression in body wall muscles at 14.5 dpc. Expressed in epithelial cells of the trachea, bronchus, lung, intestine, pancreas, and liver.

Its subcellular location is the endoplasmic reticulum membrane. Its function is as follows. Inhibits the activity of the calcium ATPases ATP2A2/SERCA2 and ATP2A3/SERCA3 by decreasing their apparent affinity for Ca(2+). In Mus musculus (Mouse), this protein is Endoregulin (Erln).